We begin with the raw amino-acid sequence, 162 residues long: 2-C-methyl-D-erythritol 2,4-cyclodiphosphate synthase (162 aa).

Asp-8 and His-10 together coordinate a divalent metal cation. Residues 8–10 (DVH) and 36–37 (HS) contribute to the 4-CDP-2-C-methyl-D-erythritol 2-phosphate site. His-44 is an a divalent metal cation binding site. Residues 58–60 (DIG), 63–67 (FPDTD), 102–108 (AQAPKMA), 134–137 (TTTE), Phe-141, and Arg-144 each bind 4-CDP-2-C-methyl-D-erythritol 2-phosphate.

This sequence belongs to the IspF family. In terms of assembly, homotrimer. The cofactor is a divalent metal cation.

The enzyme catalyses 4-CDP-2-C-methyl-D-erythritol 2-phosphate = 2-C-methyl-D-erythritol 2,4-cyclic diphosphate + CMP. Its pathway is isoprenoid biosynthesis; isopentenyl diphosphate biosynthesis via DXP pathway; isopentenyl diphosphate from 1-deoxy-D-xylulose 5-phosphate: step 4/6. Involved in the biosynthesis of isopentenyl diphosphate (IPP) and dimethylallyl diphosphate (DMAPP), two major building blocks of isoprenoid compounds. Catalyzes the conversion of 4-diphosphocytidyl-2-C-methyl-D-erythritol 2-phosphate (CDP-ME2P) to 2-C-methyl-D-erythritol 2,4-cyclodiphosphate (ME-CPP) with a corresponding release of cytidine 5-monophosphate (CMP). This Yersinia pseudotuberculosis serotype O:1b (strain IP 31758) protein is 2-C-methyl-D-erythritol 2,4-cyclodiphosphate synthase.